We begin with the raw amino-acid sequence, 334 residues long: Glycerol-1-phosphate dehydrogenase [NAD(P)+] (334 aa).

Residues 77–81 (GKPID) and 99–102 (TTAS) contribute to the NAD(+) site. Asp-104 contributes to the substrate binding site. Ser-108 lines the NAD(+) pocket. Asp-147 lines the substrate pocket. Residues Asp-147 and His-225 each contribute to the Zn(2+) site. Position 229 (His-229) interacts with substrate. Residue His-246 participates in Zn(2+) binding.

The protein belongs to the glycerol-1-phosphate dehydrogenase family. Requires Zn(2+) as cofactor.

The protein localises to the cytoplasm. It carries out the reaction sn-glycerol 1-phosphate + NAD(+) = dihydroxyacetone phosphate + NADH + H(+). It catalyses the reaction sn-glycerol 1-phosphate + NADP(+) = dihydroxyacetone phosphate + NADPH + H(+). It participates in membrane lipid metabolism; glycerophospholipid metabolism. In terms of biological role, catalyzes the NAD(P)H-dependent reduction of dihydroxyacetonephosphate (DHAP or glycerone phosphate) to glycerol 1-phosphate (G1P). The G1P thus generated is used as the glycerophosphate backbone of phospholipids in the cellular membranes of Archaea. This is Glycerol-1-phosphate dehydrogenase [NAD(P)+] from Methanococcus vannielii (strain ATCC 35089 / DSM 1224 / JCM 13029 / OCM 148 / SB).